The primary structure comprises 342 residues: Ketoreductase nvfG (342 aa).

This sequence belongs to the NAD(P)-dependent epimerase/dehydratase family. Dihydroflavonol-4-reductase subfamily.

It functions in the pathway secondary metabolite biosynthesis; terpenoid biosynthesis. In terms of biological role, ketoreductase; part of the gene cluster that mediates the biosynthesis of novofumigatonin, a heavily oxygenated meroterpenoid containing a unique orthoester moiety. The first step of the pathway is the synthesis of 3,5-dimethylorsellinic acid (DMOA) by the polyketide synthase nvfA via condensation of one acetyl-CoA starter unit with 3 malonyl-CoA units and 2 methylations. DMOA is then converted to farnesyl-DMOA by the farnesyltransferase nvfB. Epoxydation by FAD-dependent monooxygenase nvfK, followed by a protonation-initiated cyclization catalyzed by the terpene cyclase nvfL leads to the production of asnavolin H. The short chain dehydrogenase nvfC then as a 3-OH dehydrogenase of asnovolin H to yield chemesin D. There are two branches to synthesize asnovolin A from chemesin D. In one branch, chemesin D undergoes Baeyer-Villiger oxidation by nvfH, methylation by nvfJ, and enoyl reduction by the nvfM D enoylreductase that reduces the double bond between C-5'and C-6', to form respectively asnovolin I, asnovolin K, and asnovolin A. In the other branch, the methylation precedes the Baeyer-Villiger oxidation and the enoyl reduction to yield asnovolin A via the asnovolin J intermediate. Asnovolin A is further converted to fumigatonoid A by the Fe(II)/2-oxoglutarate-dependent dioxygenase nvfI that catalyzes an endoperoxidation reaction. The alpha/beta hydrolase nvfD then acts as an epimerase that converts fumigatonoid A to its C-5' epimer, which then undergoes spontaneous or nvfD-catalyzed lactonization. The following step utilizes the ketoreductase nvfG to produce fumigatonoid B. The dioxygenase nvfE further converts fumigatonoid B into fumigatonoid C. Finally the Fe(II)/2-oxoglutarate-dependent dioxygenase nvfF catalyzes two rounds of oxidation to transform fumigatonoid C into the end product, novofumigatonin A. The chain is Ketoreductase nvfG from Aspergillus novofumigatus (strain IBT 16806).